Consider the following 100-residue polypeptide: Coiled-coil domain-containing protein 167 (100 aa).

Residues valine 14 to methionine 81 are a coiled coil. The helical transmembrane segment at methionine 82 to isoleucine 99 threads the bilayer.

The protein resides in the membrane. This is Coiled-coil domain-containing protein 167 (ccdc167) from Danio rerio (Zebrafish).